The primary structure comprises 207 residues: MKLIGLLIVAYLLGAIPNGVWVGKAFFQTDIRQAGSGNIGTTNTYRVLGPYAGTIVMVLDIAKGSVATLLPIVFHVQTVLGTATPLLFGLFAVLGHTVSIFDHFKGGKAVATSAGMLLAYNPIMFVIAAGFWVSLIYWTSIVSLASMIAFTLITLISLVFQDWYLTGIALVLTVFVFYRHRSNIQRIRQGTESMVPFGRGYHRRQAK.

The next 5 helical transmembrane spans lie at 3 to 23, 54 to 74, 81 to 101, 122 to 142, and 158 to 178; these read LIGL…VWVG, TIVM…PIVF, GTAT…VSIF, PIMF…TSIV, and LVFQ…FVFY.

It belongs to the PlsY family. In terms of assembly, probably interacts with PlsX.

It is found in the cell membrane. The enzyme catalyses an acyl phosphate + sn-glycerol 3-phosphate = a 1-acyl-sn-glycero-3-phosphate + phosphate. It functions in the pathway lipid metabolism; phospholipid metabolism. In terms of biological role, catalyzes the transfer of an acyl group from acyl-phosphate (acyl-PO(4)) to glycerol-3-phosphate (G3P) to form lysophosphatidic acid (LPA). This enzyme utilizes acyl-phosphate as fatty acyl donor, but not acyl-CoA or acyl-ACP. In Levilactobacillus brevis (strain ATCC 367 / BCRC 12310 / CIP 105137 / JCM 1170 / LMG 11437 / NCIMB 947 / NCTC 947) (Lactobacillus brevis), this protein is Glycerol-3-phosphate acyltransferase.